Reading from the N-terminus, the 435-residue chain is Gamma-glutamyl phosphate reductase (435 aa).

Belongs to the gamma-glutamyl phosphate reductase family.

It is found in the cytoplasm. It carries out the reaction L-glutamate 5-semialdehyde + phosphate + NADP(+) = L-glutamyl 5-phosphate + NADPH + H(+). The protein operates within amino-acid biosynthesis; L-proline biosynthesis; L-glutamate 5-semialdehyde from L-glutamate: step 2/2. In terms of biological role, catalyzes the NADPH-dependent reduction of L-glutamate 5-phosphate into L-glutamate 5-semialdehyde and phosphate. The product spontaneously undergoes cyclization to form 1-pyrroline-5-carboxylate. In Synechococcus sp. (strain CC9605), this protein is Gamma-glutamyl phosphate reductase.